We begin with the raw amino-acid sequence, 412 residues long: CCA-adding enzyme (412 aa).

Positions 41 and 44 each coordinate ATP. Residues serine 41 and lysine 44 each coordinate CTP. Mg(2+) is bound by residues aspartate 53, aspartate 55, and aspartate 106. Residues histidine 129, lysine 149, and tyrosine 158 each contribute to the ATP site. 3 residues coordinate CTP: histidine 129, lysine 149, and tyrosine 158.

This sequence belongs to the tRNA nucleotidyltransferase/poly(A) polymerase family. Archaeal CCA-adding enzyme subfamily. In terms of assembly, homodimer. Mg(2+) serves as cofactor.

It catalyses the reaction a tRNA precursor + 2 CTP + ATP = a tRNA with a 3' CCA end + 3 diphosphate. The enzyme catalyses a tRNA with a 3' CCA end + 2 CTP + ATP = a tRNA with a 3' CCACCA end + 3 diphosphate. Catalyzes the addition and repair of the essential 3'-terminal CCA sequence in tRNAs without using a nucleic acid template. Adds these three nucleotides in the order of C, C, and A to the tRNA nucleotide-73, using CTP and ATP as substrates and producing inorganic pyrophosphate. tRNA 3'-terminal CCA addition is required both for tRNA processing and repair. Also involved in tRNA surveillance by mediating tandem CCA addition to generate a CCACCA at the 3' terminus of unstable tRNAs. While stable tRNAs receive only 3'-terminal CCA, unstable tRNAs are marked with CCACCA and rapidly degraded. This Saccharolobus islandicus (strain Y.G.57.14 / Yellowstone #1) (Sulfolobus islandicus) protein is CCA-adding enzyme.